We begin with the raw amino-acid sequence, 322 residues long: Aldo-keto reductase family 1 member C23 (322 aa).

NADP(+) is bound at residue 20–24; sequence GFGTY. K31 serves as a coordination point for substrate. Residue D50 participates in NADP(+) binding. Y55 serves as the catalytic Proton donor. A substrate-binding site is contributed by H117. Residues 166–167, Q190, 216–221, and 269–279 contribute to the NADP(+) site; these read SN, YSALGS, and KSYNEKRIKEN.

It belongs to the aldo/keto reductase family. As to quaternary structure, monomer. As to expression, detected in follicle granulosa cells (at protein level). Detected in heart, lung, liver, kidney, stomach, uterus, testis, skeletal muscle and granulosa cells of the follicle wall.

The protein localises to the cytoplasm. NADP-dependent oxidoreductase that has 20-alpha-hydroxysteroid dehydrogenase activity. This is Aldo-keto reductase family 1 member C23 (AKR1C23) from Equus caballus (Horse).